Consider the following 433-residue polypeptide: O-methyltransferase VdtC (433 aa).

Residue Asp284 coordinates S-adenosyl-L-methionine. The active-site Proton acceptor is the His335.

The protein belongs to the class I-like SAM-binding methyltransferase superfamily. Cation-independent O-methyltransferase family. COMT subfamily.

It carries out the reaction 7,9,10-trihydroxy-3-(2-oxopropyl)-1H-benzo[g]isochromen-1-one + S-adenosyl-L-methionine = 9,10-dihydroxy-7-methoxy-3-(2-oxopropyl)-1H-benzo[g]isochromen-1-one + S-adenosyl-L-homocysteine + H(+). The protein operates within secondary metabolite biosynthesis. In terms of biological role, O-methyltransferase; part of the gene cluster that mediates the biosynthesis of viriditoxin, one of the 'classical' secondary metabolites produced by fungi and that has antibacterial activity. The first step is performed by the polyketide synthase VdtA which condenses one acetyl-CoA and 6 malonyl-CoA units to form the heptaketide monomer backbone of viriditoxin. The product of VdtA is then O-methylated on C7 by the O-methyltransferase VdtC. The O-methyl group is important for the stereoselective coupling of the monomers at the final step of viriditoxin biosynthesis. The short-chain dehydrogenase/reductase VdtF then acts as a stereospecific reductase converting the pyrone to dihydropyrone via the reduction of the C3-C4 double bond. The FAD-binding monooxygenase VdtE then converts the ketone group into a methyl-ester group to yield semi-viriditoxin. Finally, the laccase VdtB is involved in dimerization of 2 semi-viriditoxin molecules to yield the final viriditoxin. VdtB is responsible for the regioselective 6,6'-coupling of semi-viriditoxin, which yields (M)-viriditoxin and (P)-viriditoxin at a ratio of 1:2. The non-catalytic carboxylesterase-like protein VdtD affects the stereochemistical outcome of the coupling. The highly reducing polyketide synthase VdtX is not involved in viriditoxin synthesis, but might possibly play a role in the production of additional metabolites not identified yet. This chain is O-methyltransferase VdtC, found in Byssochlamys spectabilis (Paecilomyces variotii).